A 297-amino-acid chain; its full sequence is MQLKSYPAPTYAQRAKIAFQYMMPQLYLTQAAGWLAERKWGVITHFIINVFAKKYQVNLAEAEKTKASDYASFNEFFIRPLKENARPINQNPQALCLPADGRVSELGKIEENQLLQAKGHQFSLETLLANDLNLADKFKNGNFITTYLSPRDYHRVHMPCDATLRKMIYVPGELFSVNPFLAEHVPNLFARNERLICEFETAFGPMVQILVGATITASMSTVWAGVINPPRAKEVAVYEYLPTGETAVHLKKGQEMGAFRLGSTVINLFPKGAVELEAHLKAGEPTKMGERLGKINL.

Catalysis depends on charge relay system; for autoendoproteolytic cleavage activity residues Asp-100, His-157, and Ser-263. The active-site Schiff-base intermediate with substrate; via pyruvic acid; for decarboxylase activity is Ser-263. The residue at position 263 (Ser-263) is a Pyruvic acid (Ser); by autocatalysis.

This sequence belongs to the phosphatidylserine decarboxylase family. PSD-B subfamily. Prokaryotic type I sub-subfamily. In terms of assembly, heterodimer of a large membrane-associated beta subunit and a small pyruvoyl-containing alpha subunit. It depends on pyruvate as a cofactor. Is synthesized initially as an inactive proenzyme. Formation of the active enzyme involves a self-maturation process in which the active site pyruvoyl group is generated from an internal serine residue via an autocatalytic post-translational modification. Two non-identical subunits are generated from the proenzyme in this reaction, and the pyruvate is formed at the N-terminus of the alpha chain, which is derived from the carboxyl end of the proenzyme. The autoendoproteolytic cleavage occurs by a canonical serine protease mechanism, in which the side chain hydroxyl group of the serine supplies its oxygen atom to form the C-terminus of the beta chain, while the remainder of the serine residue undergoes an oxidative deamination to produce ammonia and the pyruvoyl prosthetic group on the alpha chain. During this reaction, the Ser that is part of the protease active site of the proenzyme becomes the pyruvoyl prosthetic group, which constitutes an essential element of the active site of the mature decarboxylase.

The protein resides in the cell membrane. It catalyses the reaction a 1,2-diacyl-sn-glycero-3-phospho-L-serine + H(+) = a 1,2-diacyl-sn-glycero-3-phosphoethanolamine + CO2. Its pathway is phospholipid metabolism; phosphatidylethanolamine biosynthesis; phosphatidylethanolamine from CDP-diacylglycerol: step 2/2. Functionally, catalyzes the formation of phosphatidylethanolamine (PtdEtn) from phosphatidylserine (PtdSer). This chain is Phosphatidylserine decarboxylase proenzyme, found in Glaesserella parasuis serovar 5 (strain SH0165) (Haemophilus parasuis).